Here is a 710-residue protein sequence, read N- to C-terminus: MTSSSPRHADPDENPYVEAPPTDFEPVGALSEDEATEQASLLRAAIREHDHRYYLEADPLIPDETYDRLFTRLQELENEFDLPTQNSPTRRVGGEPLDELATVEHVAPMRSIDNATEADAVREFDGRVRKGLDAEGFDSDAVEYVCEPKFDGLSVEVIYEDGEYVRAATRGDGTAGDDVTEQVRTIRSVPGKLRGDPPSRLAVRGEAYMPRDAFKAYNEALMERGEEPFANPRNAAAGTLRQLDPSVVAERPLDIFFFDVLGWENDAEGDSPNRPATHWEEFDTFDAFGLRRANRVERVDDIEGALDYRDRLMADREDLNFAIDGVVIAVDDRANREALGATARAPRWAFAYKFPPRTATTIVEGITVQVGRTGRLTPVAELDPIDVGGVTVSRATLHNPAEIEALGVNVGDCVRIYRAGDVIPYVPEVVEKRSEGTYVFPETCPICDAPVERDGPLAFCTGGLVCPAQLERAVEHWARRDALDIEGLGPERVQQLREAGLVESLPDLYDLAVDDLAALEGWGETSAENLIAELAATRDPPLDDFLAGLGIPDVGATTARALAAHFGDLDAILDADEDALRAVDDVGPEVAESIRTFLDNAENRVAIDGLRERGVDPESVDVETGDALDGLTFVFTGSLSTTRGEAQAHVEAHGADATSSVSGNTDYLVAGESPGRSKRDDADAEGVPVVDEEEFAGLLAERGVAWPPEE.

A disordered region spans residues 1-36; sequence MTSSSPRHADPDENPYVEAPPTDFEPVGALSEDEAT. Residues 63–67, 111–112, and E147 contribute to the NAD(+) site; these read DETYD and SI. The active-site N6-AMP-lysine intermediate is K149. Positions 170, 206, and 353 each coordinate NAD(+). Zn(2+)-binding residues include C444, C447, C460, and C466. The BRCT domain maps to 623–710; the sequence is ETGDALDGLT…ERGVAWPPEE (88 aa). The disordered stretch occupies residues 657–689; it reads ATSSVSGNTDYLVAGESPGRSKRDDADAEGVPV.

Belongs to the NAD-dependent DNA ligase family. LigA subfamily. Mg(2+) is required as a cofactor. Requires Mn(2+) as cofactor.

It catalyses the reaction NAD(+) + (deoxyribonucleotide)n-3'-hydroxyl + 5'-phospho-(deoxyribonucleotide)m = (deoxyribonucleotide)n+m + AMP + beta-nicotinamide D-nucleotide.. In terms of biological role, DNA ligase that catalyzes the formation of phosphodiester linkages between 5'-phosphoryl and 3'-hydroxyl groups in double-stranded DNA using NAD as a coenzyme and as the energy source for the reaction. It is essential for DNA replication and repair of damaged DNA. The polypeptide is DNA ligase (Halorubrum lacusprofundi (strain ATCC 49239 / DSM 5036 / JCM 8891 / ACAM 34)).